Reading from the N-terminus, the 270-residue chain is Oxidoreductase claK (270 aa).

The protein belongs to the avfA family.

It functions in the pathway pigment biosynthesis. In terms of biological role, oxidoreductase; part of the gene cluster that mediates the biosynthesis of the bianthraquinone cladofulvin, a conidial pigment not required for virulence but that plays a role in fitness and resistance to environmental stresses including UV light and low-temperature stress. The pathway begins with the synthesis of atrochrysone thioester by the polyketide synthase (PKS) claG. The atrochrysone carboxyl ACP thioesterase claF then breaks the thioester bond and releases the atrochrysone carboxylic acid from claG. This compound is decarboxylated by claH to yield emodin, which is further converted to chrysophanol hydroquinone by the reductase claC and the dehydratase claB. The cytochrome monooxygenase P450 claM then catalyzes the dimerization of nataloe-emodin to cladofulvin. The sequence is that of Oxidoreductase claK from Passalora fulva (Tomato leaf mold).